Reading from the N-terminus, the 426-residue chain is Ubiquitin carboxyl-terminal hydrolase 46 (426 aa).

Residue glycine 2 is the site of N-myristoyl glycine attachment. The USP domain occupies 27 to 406 (YGLVNFGNTC…SAYILFYQAR (380 aa)). Residue cysteine 36 is the Nucleophile of the active site. Residues 162-181 (TAGLPRSDEKGTSERNGGIT) form a disordered region. The active-site Proton acceptor is histidine 342.

The protein belongs to the peptidase C19 family. Interacts with wdr-20 and wdr-48; the catalytic activity of usp-46 is increased in the presence of both wdr-20 and wdr-48. Interacts with glr-1; the interaction results in deubiquitination of glr-1. In terms of tissue distribution, expressed in a number of tissues including the nervous system, pharynx, body wall muscle, vulva muscle and intestine and is detected in many head and ventral cord neurons.

Its subcellular location is the perikaryon. It localises to the cytoplasm. The enzyme catalyses Thiol-dependent hydrolysis of ester, thioester, amide, peptide and isopeptide bonds formed by the C-terminal Gly of ubiquitin (a 76-residue protein attached to proteins as an intracellular targeting signal).. Functionally, regulates the abundance of the glr-1 glutamate receptor in the ventral nerve cord by promoting its deubiquitination and preventing its degradation in the lysosome. Contributes to the regulation of embryonic polarity. This is Ubiquitin carboxyl-terminal hydrolase 46 (usp-46) from Caenorhabditis elegans.